The primary structure comprises 126 residues: Fluoride-specific ion channel FluC (126 aa).

4 consecutive transmembrane segments (helical) span residues 3–23 (LSIL…WFLG), 35–55 (LGTL…VAYF), 68–88 (FIIT…AEVV), and 103–123 (IAIH…TVAV). Positions 75 and 78 each coordinate Na(+).

It belongs to the fluoride channel Fluc/FEX (TC 1.A.43) family.

The protein localises to the cell inner membrane. The enzyme catalyses fluoride(in) = fluoride(out). Na(+) is not transported, but it plays an essential structural role and its presence is essential for fluoride channel function. In terms of biological role, fluoride-specific ion channel. Important for reducing fluoride concentration in the cell, thus reducing its toxicity. The protein is Fluoride-specific ion channel FluC of Paraburkholderia phymatum (strain DSM 17167 / CIP 108236 / LMG 21445 / STM815) (Burkholderia phymatum).